A 322-amino-acid chain; its full sequence is Lipoyl synthase (322 aa).

[4Fe-4S] cluster-binding residues include Cys66, Cys71, Cys77, Cys92, Cys96, Cys99, and Ser306. The 218-residue stretch at 78 to 295 (FSKGTATFMI…EKEAYELGFS (218 aa)) folds into the Radical SAM core domain.

This sequence belongs to the radical SAM superfamily. Lipoyl synthase family. [4Fe-4S] cluster is required as a cofactor.

It is found in the cytoplasm. It carries out the reaction [[Fe-S] cluster scaffold protein carrying a second [4Fe-4S](2+) cluster] + N(6)-octanoyl-L-lysyl-[protein] + 2 oxidized [2Fe-2S]-[ferredoxin] + 2 S-adenosyl-L-methionine + 4 H(+) = [[Fe-S] cluster scaffold protein] + N(6)-[(R)-dihydrolipoyl]-L-lysyl-[protein] + 4 Fe(3+) + 2 hydrogen sulfide + 2 5'-deoxyadenosine + 2 L-methionine + 2 reduced [2Fe-2S]-[ferredoxin]. It participates in protein modification; protein lipoylation via endogenous pathway; protein N(6)-(lipoyl)lysine from octanoyl-[acyl-carrier-protein]: step 2/2. In terms of biological role, catalyzes the radical-mediated insertion of two sulfur atoms into the C-6 and C-8 positions of the octanoyl moiety bound to the lipoyl domains of lipoate-dependent enzymes, thereby converting the octanoylated domains into lipoylated derivatives. The polypeptide is Lipoyl synthase (Neisseria meningitidis serogroup C (strain 053442)).